The primary structure comprises 459 residues: Cysteine--tRNA ligase (459 aa).

Zn(2+) is bound at residue Cys31. A 'HIGH' region motif is present at residues Pro33–Asn43. 3 residues coordinate Zn(2+): Cys216, His241, and Glu245. The 'KMSKS' region motif lies at Lys274 to Ser278. Lys277 lines the ATP pocket.

It belongs to the class-I aminoacyl-tRNA synthetase family. Monomer. Zn(2+) serves as cofactor.

It is found in the cytoplasm. The catalysed reaction is tRNA(Cys) + L-cysteine + ATP = L-cysteinyl-tRNA(Cys) + AMP + diphosphate. The chain is Cysteine--tRNA ligase from Rickettsia massiliae (strain Mtu5).